A 114-amino-acid polypeptide reads, in one-letter code: Endoribonuclease MazF2 (114 aa).

It belongs to the PemK/MazF family. Probably forms a complex with cognate antitoxin MazE2.

Toxic component of a type II toxin-antitoxin (TA) system. Acts as an endoribonuclease on single-strand RNA, cleaving between the second and third bases in the sequences CUCCU and UUCCU. Neutralized by coexpression with cognate antitoxin MazE2. The polypeptide is Endoribonuclease MazF2 (mazF2) (Mycobacterium bovis (strain ATCC BAA-935 / AF2122/97)).